Consider the following 343-residue polypeptide: Galactoside alpha-(1,2)-fucosyltransferase 2 (343 aa).

At 1-14 (MLVVQMPFSFPVAH) the chain is on the cytoplasmic side. A helical; Signal-anchor for type II membrane protein membrane pass occupies residues 15 to 28 (FILFVFTVSTIFHI). The Lumenal segment spans residues 29–343 (QQRLAKIQAM…AADLSPLLKH (315 aa)). N-linked (GlcNAc...) asparagine glycosylation is found at asparagine 188, asparagine 282, and asparagine 308.

It belongs to the glycosyltransferase 11 family.

It is found in the golgi apparatus. Its subcellular location is the golgi stack membrane. The catalysed reaction is a beta-D-galactosyl-(1-&gt;3)-N-acetyl-beta-D-glucosaminyl derivative + GDP-beta-L-fucose = an alpha-L-Fuc-(1-&gt;2)-beta-D-Gal-(1-&gt;3)-beta-D-GlcNAc derivative + GDP + H(+). It catalyses the reaction a beta-D-galactosyl-(1-&gt;4)-N-acetyl-beta-D-glucosaminyl derivative + GDP-beta-L-fucose = an alpha-L-Fuc-(1-&gt;2)-beta-D-Gal-(1-&gt;4)-beta-D-GlcNAc derivative + GDP + H(+). The enzyme catalyses a neolactoside nLc4Cer + GDP-beta-L-fucose = a neolactoside IV(2)-alpha-Fuc-nLc4Cer + GDP + H(+). It carries out the reaction a neolactoside nLc4Cer(d18:1(4E)) + GDP-beta-L-fucose = a neolactoside IV(2)-alpha-Fuc-nLc4Cer(d18:1(4E)) + GDP + H(+). The catalysed reaction is a ganglioside GM1 + GDP-beta-L-fucose = a ganglioside Fuc-GM1 + GDP + H(+). It catalyses the reaction a ganglioside GA1 + GDP-beta-L-fucose = a ganglioside Fuc-GA1 + GDP + H(+). The enzyme catalyses Lc4Cer + GDP-beta-L-fucose = alpha-L-fucosyl-(1-&gt;2)-beta-D-galactosyl-(1-&gt;3)-N-acetyl-beta-D-glucosaminyl-(1-&gt;3)-beta-D-galactosyl-(1-&gt;4)-beta-D-glucosyl-(1&lt;-&gt;1')-ceramide + GDP + H(+). It carries out the reaction a beta-D-Gal-(1-&gt;3)-beta-D-GlcNAc-(1-&gt;3)-beta-D-Gal-(1-&gt;4)-beta-D-Glc-(1&lt;-&gt;1')-Cer(d18:1(4E)) + GDP-beta-L-fucose = alpha-L-fucosyl-(1-&gt;2)- beta-D-galactosyl-(1-&gt;3)-N-acetyl-beta-D-glucosaminyl-(1-&gt;3)-beta-D-galactosyl-(1-&gt;4)-beta-D-glucosyl-(1&lt;-&gt;1')-N-acylsphing-4-enine + GDP + H(+). The catalysed reaction is a ganglioside GD1b + GDP-beta-L-fucose = a ganglioside Fuc-GD1b + GDP + H(+). It catalyses the reaction a ganglioside GM1 (d18:1(4E)) + GDP-beta-L-fucose = a ganglioside Fuc-GM1 (d18:1(4E)) + GDP + H(+). The enzyme catalyses a globoside GalGb4Cer (d18:1(4E)) + GDP-beta-L-fucose = a globoside Globo-H (d18:1(4E)) + GDP + H(+). It carries out the reaction a lactoside III(4)-a-Fuc-Lc4Cer + GDP-beta-L-fucose = a lactoside IV(2),III(4)-a-[Fuc]2-Lc4Cer + GDP + H(+). The catalysed reaction is beta-D-galactosyl-(1-&gt;3)-N-acetyl-D-galactosamine + GDP-beta-L-fucose = alpha-L-fucosyl-(1-&gt;2)-beta-D-galactosyl-(1-&gt;3)-N-acetyl-D-galactosamine + GDP + H(+). It participates in protein modification; protein glycosylation. Catalyzes the transfer of L-fucose, from a guanosine diphosphate-beta-L-fucose, to the terminal galactose on both O- and N-linked glycans chains of cell surface glycoproteins and glycolipids and the resulting epitope regulates several processes such as cell-cell interaction including host-microbe interaction, cell surface expression and cell proliferation. Preferentially fucosylates gangliosides GA1 and GM1 in the antrum, cecum and colon and in the female reproductive organs. Fucosylated host glycoproteins or glycolipids mediate interaction with intestinal microbiota influencing its composition. Creates a soluble precursor oligosaccharide FuC-alpha ((1,2)Galbeta-) called the H antigen which is an essential substrate for the final step in the soluble ABO blood group antigen synthesis pathway. The chain is Galactoside alpha-(1,2)-fucosyltransferase 2 from Pongo pygmaeus (Bornean orangutan).